The following is an 839-amino-acid chain: Probable inorganic carbon transporter subunit DabA (839 aa).

Residues cysteine 353, aspartate 355, histidine 537, and cysteine 552 each coordinate Zn(2+).

It belongs to the inorganic carbon transporter (TC 9.A.2) DabA family. As to quaternary structure, forms a complex with DabB. It depends on Zn(2+) as a cofactor.

The protein localises to the cell membrane. Functionally, part of an energy-coupled inorganic carbon pump. The chain is Probable inorganic carbon transporter subunit DabA from Chloroflexus aggregans (strain MD-66 / DSM 9485).